The primary structure comprises 692 residues: Elongation factor G (692 aa).

The 276-residue stretch at 8–283 (NRIRNIGIAA…AVIDYLPAPT (276 aa)) folds into the tr-type G domain. Residues 17–24 (AHIDAGKT), 81–85 (DTPGH), and 135–138 (NKMD) each bind GTP.

This sequence belongs to the TRAFAC class translation factor GTPase superfamily. Classic translation factor GTPase family. EF-G/EF-2 subfamily.

It is found in the cytoplasm. In terms of biological role, catalyzes the GTP-dependent ribosomal translocation step during translation elongation. During this step, the ribosome changes from the pre-translocational (PRE) to the post-translocational (POST) state as the newly formed A-site-bound peptidyl-tRNA and P-site-bound deacylated tRNA move to the P and E sites, respectively. Catalyzes the coordinated movement of the two tRNA molecules, the mRNA and conformational changes in the ribosome. This is Elongation factor G (fusA) from Helicobacter pylori (strain ATCC 700392 / 26695) (Campylobacter pylori).